The chain runs to 397 residues: 2,3-bisphosphoglycerate-independent phosphoglycerate mutase (397 aa).

It belongs to the BPG-independent phosphoglycerate mutase family. A-PGAM subfamily.

The catalysed reaction is (2R)-2-phosphoglycerate = (2R)-3-phosphoglycerate. The protein operates within carbohydrate degradation; glycolysis; pyruvate from D-glyceraldehyde 3-phosphate: step 3/5. Its function is as follows. Catalyzes the interconversion of 2-phosphoglycerate and 3-phosphoglycerate. The sequence is that of 2,3-bisphosphoglycerate-independent phosphoglycerate mutase from Methanosarcina acetivorans (strain ATCC 35395 / DSM 2834 / JCM 12185 / C2A).